The chain runs to 212 residues: ER lumen protein-retaining receptor 1-A (212 aa).

Topologically, residues 1 to 4 are lumenal; sequence MNIF. A helical transmembrane segment spans residues 5 to 24; it reads RFLGDISHLSAIFILLLKIW. Over 25–32 the chain is Cytoplasmic; sequence KSRSCAGI. A helical transmembrane segment spans residues 33–52; that stretch reads SGKSQLLFAIVFTARYLDLF. Positions 47-48 are interaction with the K-D-E-L motif on target proteins; sequence RY. At 53–58 the chain is on the lumenal side; it reads TNYISF. Residues 59–79 traverse the membrane as a helical segment; the sequence is YNTSMKVVYVASSYATVWMIY. At 80 to 92 the chain is on the cytoplasmic side; that stretch reads SKFKATYDGNHDT. Residues 93 to 110 form a helical membrane-spanning segment; sequence FRVEFLIVPTAILAFLVN. Over 111-116 the chain is Lumenal; it reads HDFTPL. A helical membrane pass occupies residues 117–135; it reads EIFWTFSIYLESVAILPQL. The Cytoplasmic segment spans residues 136–149; the sequence is FMVSKTGEAETITS. The helical transmembrane segment at 150-168 threads the bilayer; sequence HYLFALGIYRTLYLFNWIW. The interaction with the K-D-E-L motif on target proteins stretch occupies residues 159-169; it reads RTLYLFNWIWR. Residues 169–178 lie on the Lumenal side of the membrane; it reads RYQFEGFFDL. The chain crosses the membrane as a helical span at residues 179–199; that stretch reads IAIVAGLVQTVLYCDFFYLYV. Residues 200–212 lie on the Cytoplasmic side of the membrane; it reads TKVLKGKKLSLPA. The segment at 204–207 is important for recycling of cargo proteins with the sequence motif K-D-E-L from the Golgi to the endoplasmic reticulum; it reads KGKK.

The protein belongs to the ERD2 family.

The protein localises to the golgi apparatus membrane. The protein resides in the cytoplasmic vesicle. It is found in the COPI-coated vesicle membrane. Its subcellular location is the endoplasmic reticulum membrane. It localises to the endoplasmic reticulum-Golgi intermediate compartment membrane. In terms of biological role, receptor for the C-terminal sequence motif K-D-E-L that is present on endoplasmic reticulum resident proteins and that mediates their recycling from the Golgi back to the endoplasmic reticulum. This is ER lumen protein-retaining receptor 1-A (kdelr1-a) from Xenopus laevis (African clawed frog).